Reading from the N-terminus, the 112-residue chain is T cell receptor alpha variable 9-2 (112 aa).

Residues 1 to 20 (MNYSPGLVSLILLLLGRTRG) form the signal peptide. In terms of domain architecture, Ig-like spans 21-112 (DSVTQMEGPV…DSAVYFCALS (92 aa)). Residue Asn-41 is glycosylated (N-linked (GlcNAc...) asparagine). A disulfide bond links Cys-42 and Cys-109.

Alpha-beta TR is a heterodimer composed of an alpha and beta chain; disulfide-linked. The alpha-beta TR is associated with the transmembrane signaling CD3 coreceptor proteins to form the TR-CD3 (TcR or TCR). The assembly of alpha-beta TR heterodimers with CD3 occurs in the endoplasmic reticulum where a single alpha-beta TR heterodimer associates with one CD3D-CD3E heterodimer, one CD3G-CD3E heterodimer and one CD247 homodimer forming a stable octameric structure. CD3D-CD3E and CD3G-CD3E heterodimers preferentially associate with TR alpha and TR beta chains, respectively. The association of the CD247 homodimer is the last step of TcR assembly in the endoplasmic reticulum and is required for transport to the cell surface.

The protein localises to the cell membrane. Functionally, v region of the variable domain of T cell receptor (TR) alpha chain that participates in the antigen recognition. Alpha-beta T cell receptors are antigen specific receptors which are essential to the immune response and are present on the cell surface of T lymphocytes. Recognize peptide-major histocompatibility (MH) (pMH) complexes that are displayed by antigen presenting cells (APC), a prerequisite for efficient T cell adaptive immunity against pathogens. Binding of alpha-beta TR to pMH complex initiates TR-CD3 clustering on the cell surface and intracellular activation of LCK that phosphorylates the ITAM motifs of CD3G, CD3D, CD3E and CD247 enabling the recruitment of ZAP70. In turn ZAP70 phosphorylates LAT, which recruits numerous signaling molecules to form the LAT signalosome. The LAT signalosome propagates signal branching to three major signaling pathways, the calcium, the mitogen-activated protein kinase (MAPK) kinase and the nuclear factor NF-kappa-B (NF-kB) pathways, leading to the mobilization of transcription factors that are critical for gene expression and essential for T cell growth and differentiation. The T cell repertoire is generated in the thymus, by V-(D)-J rearrangement. This repertoire is then shaped by intrathymic selection events to generate a peripheral T cell pool of self-MH restricted, non-autoaggressive T cells. Post-thymic interaction of alpha-beta TR with the pMH complexes shapes TR structural and functional avidity. The polypeptide is T cell receptor alpha variable 9-2 (Homo sapiens (Human)).